A 436-amino-acid chain; its full sequence is Citrate synthase (436 aa).

Catalysis depends on residues His313 and Asp371.

This sequence belongs to the citrate synthase family. In terms of assembly, homohexamer.

It catalyses the reaction oxaloacetate + acetyl-CoA + H2O = citrate + CoA + H(+). The protein operates within carbohydrate metabolism; tricarboxylic acid cycle; isocitrate from oxaloacetate: step 1/2. In Acetobacter aceti, this protein is Citrate synthase (aarA).